Reading from the N-terminus, the 593-residue chain is Mono(ADP-ribosyl)transferase SpvB (593 aa).

The interval 361–384 (PVNNMMPPPPPPPPPMMGGNSSRP) is disordered. Residues 366-376 (MPPPPPPPPPM) show a composition bias toward pro residues. Residues 375–578 (PMMGGNSSRP…LRLSDDATAD (204 aa)) enclose the TR mART core domain. Catalysis depends on residues arginine 473, serine 503, and glutamate 540.

This sequence belongs to the SpvB family.

The protein localises to the secreted. The enzyme catalyses L-arginyl-[protein] + NAD(+) = N(omega)-(ADP-D-ribosyl)-L-arginyl-[protein] + nicotinamide + H(+). Mono-ADP-ribosylates muscle and non-muscle actin. ADP-ribosylates Chinese hamster ovary and HeLa cell actin as well as rabbit muscle, porcine heart actin and non-muscle beta- and gamma-actin. ADP-ribosylation of actin prevents the polymerization of G actin to F actin, causing actin filament depolymerization, destruction of the cytoskeleton and cytotoxicity; this requires only the C-terminal 120 residues. Does not possess NAD(+)-glycohydrolase activity, unlike most mART enzymes. This chain is Mono(ADP-ribosyl)transferase SpvB (spvB), found in Salmonella dublin.